Consider the following 131-residue polypeptide: Translation initiation factor 5A (131 aa).

K37 is subject to Hypusine.

The protein belongs to the eIF-5A family.

Its subcellular location is the cytoplasm. In terms of biological role, functions by promoting the formation of the first peptide bond. This chain is Translation initiation factor 5A (eIF5A), found in Methanococcus aeolicus (strain ATCC BAA-1280 / DSM 17508 / OCM 812 / Nankai-3).